Consider the following 367-residue polypeptide: Histidinol-phosphate aminotransferase 1 (367 aa).

Residue K229 is modified to N6-(pyridoxal phosphate)lysine.

The protein belongs to the class-II pyridoxal-phosphate-dependent aminotransferase family. Histidinol-phosphate aminotransferase subfamily. As to quaternary structure, homodimer. It depends on pyridoxal 5'-phosphate as a cofactor.

The catalysed reaction is L-histidinol phosphate + 2-oxoglutarate = 3-(imidazol-4-yl)-2-oxopropyl phosphate + L-glutamate. Its pathway is amino-acid biosynthesis; L-histidine biosynthesis; L-histidine from 5-phospho-alpha-D-ribose 1-diphosphate: step 7/9. The sequence is that of Histidinol-phosphate aminotransferase 1 (hisC1) from Mesorhizobium japonicum (strain LMG 29417 / CECT 9101 / MAFF 303099) (Mesorhizobium loti (strain MAFF 303099)).